The sequence spans 75 residues: Small ribosomal subunit protein bS18c (75 aa).

The protein belongs to the bacterial ribosomal protein bS18 family. Part of the 30S ribosomal subunit.

The protein resides in the plastid. The protein is Small ribosomal subunit protein bS18c of Aneura mirabilis (Parasitic liverwort).